The sequence spans 395 residues: 1-deoxy-D-xylulose 5-phosphate reductoisomerase (395 aa).

T10, G11, S12, I13, N38, and N122 together coordinate NADPH. Residue K123 participates in 1-deoxy-D-xylulose 5-phosphate binding. E124 is a binding site for NADPH. D148 contributes to the Mn(2+) binding site. The 1-deoxy-D-xylulose 5-phosphate site is built by S149, E150, S178, and H200. A Mn(2+)-binding site is contributed by E150. G206 is an NADPH binding site. 1-deoxy-D-xylulose 5-phosphate-binding residues include S213, N218, K219, and E222. E222 contacts Mn(2+).

It belongs to the DXR family. It depends on Mg(2+) as a cofactor. Mn(2+) serves as cofactor.

The catalysed reaction is 2-C-methyl-D-erythritol 4-phosphate + NADP(+) = 1-deoxy-D-xylulose 5-phosphate + NADPH + H(+). It functions in the pathway isoprenoid biosynthesis; isopentenyl diphosphate biosynthesis via DXP pathway; isopentenyl diphosphate from 1-deoxy-D-xylulose 5-phosphate: step 1/6. In terms of biological role, catalyzes the NADPH-dependent rearrangement and reduction of 1-deoxy-D-xylulose-5-phosphate (DXP) to 2-C-methyl-D-erythritol 4-phosphate (MEP). The polypeptide is 1-deoxy-D-xylulose 5-phosphate reductoisomerase (Elusimicrobium minutum (strain Pei191)).